A 230-amino-acid polypeptide reads, in one-letter code: Flagellar L-ring protein (230 aa).

The N-terminal stretch at Met1–Gly18 is a signal peptide. Cys19 is lipidated: N-palmitoyl cysteine. Cys19 is lipidated: S-diacylglycerol cysteine.

The protein belongs to the FlgH family. As to quaternary structure, the basal body constitutes a major portion of the flagellar organelle and consists of four rings (L,P,S, and M) mounted on a central rod.

It localises to the cell outer membrane. The protein resides in the bacterial flagellum basal body. Assembles around the rod to form the L-ring and probably protects the motor/basal body from shearing forces during rotation. This Legionella pneumophila (strain Paris) protein is Flagellar L-ring protein.